The primary structure comprises 136 residues: UPF0216 protein PF0452 (136 aa).

It belongs to the UPF0216 family.

The sequence is that of UPF0216 protein PF0452 from Pyrococcus furiosus (strain ATCC 43587 / DSM 3638 / JCM 8422 / Vc1).